A 326-amino-acid chain; its full sequence is tRNA-modifying protein YgfZ (326 aa).

Folate is bound by residues W27 and W189.

This sequence belongs to the tRNA-modifying YgfZ family.

It localises to the cytoplasm. Folate-binding protein involved in regulating the level of ATP-DnaA and in the modification of some tRNAs. It is probably a key factor in regulatory networks that act via tRNA modification, such as initiation of chromosomal replication. In Escherichia coli O6:H1 (strain CFT073 / ATCC 700928 / UPEC), this protein is tRNA-modifying protein YgfZ.